The following is a 420-amino-acid chain: Glucose-1-phosphate adenylyltransferase (420 aa).

Residues Tyr-107, Gly-173, 188–189 (EK), and Ser-206 each bind alpha-D-glucose 1-phosphate.

It belongs to the bacterial/plant glucose-1-phosphate adenylyltransferase family. Homotetramer.

It carries out the reaction alpha-D-glucose 1-phosphate + ATP + H(+) = ADP-alpha-D-glucose + diphosphate. It participates in glycan biosynthesis; glycogen biosynthesis. In terms of biological role, involved in the biosynthesis of ADP-glucose, a building block required for the elongation reactions to produce glycogen. Catalyzes the reaction between ATP and alpha-D-glucose 1-phosphate (G1P) to produce pyrophosphate and ADP-Glc. The polypeptide is Glucose-1-phosphate adenylyltransferase (Shewanella baltica (strain OS185)).